The primary structure comprises 247 residues: MIPQVVTSETVTVISPNGISFPQTDKPQPSHQSQDSLKKHLKAEIKVMAAIQIMCAVMVLSLGIILASVPSNLHFTSVFSILLESGYPFVGALFFAISGILSIVTEKKMTKPLVHSSLALSILSVLSALTGIAILSVSLAALEPALQQCKLAFTQLDTTQDAYHFFSPEPLNSCFVAKAALTGVFSLMLISSVLELGLAVLTATLWWKQSSSAFSGNVIFLSQNSKNKSSVSSESLCNPTYENILTS.

Over 1–46 (MIPQVVTSETVTVISPNGISFPQTDKPQPSHQSQDSLKKHLKAEIK) the chain is Cytoplasmic. A helical transmembrane segment spans residues 47-67 (VMAAIQIMCAVMVLSLGIILA). Topologically, residues 68–80 (SVPSNLHFTSVFS) are extracellular. The helical transmembrane segment at 81-101 (ILLESGYPFVGALFFAISGIL) threads the bilayer. Residues 102 to 121 (SIVTEKKMTKPLVHSSLALS) are Cytoplasmic-facing. The helical transmembrane segment at 122 to 142 (ILSVLSALTGIAILSVSLAAL) threads the bilayer. Over 143–180 (EPALQQCKLAFTQLDTTQDAYHFFSPEPLNSCFVAKAA) the chain is Extracellular. A helical transmembrane segment spans residues 181–201 (LTGVFSLMLISSVLELGLAVL). At 202–247 (TATLWWKQSSSAFSGNVIFLSQNSKNKSSVSSESLCNPTYENILTS) the chain is on the cytoplasmic side. Ser-235 is subject to Phosphoserine.

This sequence belongs to the MS4A family. As to expression, expressed in thymus, spleen, intestine, colon, testis, heart, liver, brain, kidney, peripheral lymph node and bone marrow.

Its subcellular location is the membrane. Its function is as follows. May be involved in signal transduction as a component of a multimeric receptor complex. In Mus musculus (Mouse), this protein is Membrane-spanning 4-domains subfamily A member 6D (Ms4a6d).